A 152-amino-acid polypeptide reads, in one-letter code: Endoribonuclease YbeY (152 aa).

Zn(2+) is bound by residues His112, His116, and His122.

It belongs to the endoribonuclease YbeY family. Requires Zn(2+) as cofactor.

The protein resides in the cytoplasm. Single strand-specific metallo-endoribonuclease involved in late-stage 70S ribosome quality control and in maturation of the 3' terminus of the 16S rRNA. The sequence is that of Endoribonuclease YbeY from Pseudoalteromonas translucida (strain TAC 125).